The sequence spans 129 residues: Small ribosomal subunit protein uS11 (129 aa).

It belongs to the universal ribosomal protein uS11 family. In terms of assembly, part of the 30S ribosomal subunit. Interacts with proteins S7 and S18. Binds to IF-3.

Functionally, located on the platform of the 30S subunit, it bridges several disparate RNA helices of the 16S rRNA. Forms part of the Shine-Dalgarno cleft in the 70S ribosome. This Oleidesulfovibrio alaskensis (strain ATCC BAA-1058 / DSM 17464 / G20) (Desulfovibrio alaskensis) protein is Small ribosomal subunit protein uS11.